We begin with the raw amino-acid sequence, 301 residues long: tRNA uridine(34) hydroxylase (301 aa).

The 92-residue stretch at 121 to 212 (NDKDTLVLDS…YLKNIKKKES (92 aa)) folds into the Rhodanese domain. The active-site Cysteine persulfide intermediate is the Cys172.

It belongs to the TrhO family.

The enzyme catalyses uridine(34) in tRNA + AH2 + O2 = 5-hydroxyuridine(34) in tRNA + A + H2O. Functionally, catalyzes oxygen-dependent 5-hydroxyuridine (ho5U) modification at position 34 in tRNAs. This is tRNA uridine(34) hydroxylase from Pelagibacter ubique (strain HTCC1062).